A 788-amino-acid chain; its full sequence is MRFSSLLACLGAVGIQAAAIPFQRRVDNTTDSGSLDAAQAAAAIVDGYWLNDLSGKGRAPFNSNPNYKVFRNVKDYGAKGDGVTDDSDAFNRAISDGSRCGPWVCDSSTDSPAVVYVPSGTYLINKPIIFYYMTALIGNPRELPVLKAASSLQALALIDGSPYSNQNGEPGWISTNLFLRQIRNLIIDGTAVAPTSGFQAIHWPASQATTIQNVKIRMTQASNSVHAGIFVENGSGGHMADLDITGGLYGMNIGNQQFTMRNVKISKAVVGISQIWNWGWLYSGLQISDCGTAFSMVNGGSAGKQEVGSAVIIDSEITNCQKFVDSAWSQTSNPTGSGQLVIENIKLTNVPAAVVSNGATVLAGGSLTIQTWGQGNKYAPNASGPSKFQGAISGATRPTGLLQNGKFYSKSKPQYETLSTSSFISARGAGATGDGVTDDTRAVQAAVTQAASQNKVLFFEHGVYKVTNTIYVPPGSRMVGEIFSAIMGSGSTFGDQANPVPIIQIGKPGESGSIEWSDMIVQTQGATPGAIVIQYNLNTALGSGLWDVHTRIGGAKGTNLQVAQCPAVLGQVKPECFSAHTNVHVTKGANGAYFENNWFWTADHDLDDADSTRINIYTGRGFHVEANNVWIWANGAEHHTMYQYQFNAAQDIFAGYIQTETPYFQPTPIAPLPYVSSSKYSDPVYSSSQTSAWGLRLLDAKNVLIYGGGLYSFFDNYDVGCSSPTAPNGFRDCQTRILSIEGSTSVQAFGFSEVGVEWMVTAAGQDKANWKDNLSVYPTTIGYLSYGF.

A signal peptide spans 1–42; sequence MRFSSLLACLGAVGIQAAAIPFQRRVDNTTDSGSLDAAQAAA. N-linked (GlcNAc...) asparagine glycans are attached at residues asparagine 28, asparagine 233, asparagine 381, and asparagine 773.

It belongs to the glycosyl hydrolase 55 family.

It catalyses the reaction Successive hydrolysis of beta-D-glucose units from the non-reducing ends of (1-&gt;3)-beta-D-glucans, releasing alpha-glucose.. This is Glucan 1,3-beta-glucosidase (EXG1) from Cochliobolus carbonum (Maize leaf spot fungus).